Reading from the N-terminus, the 402-residue chain is Argininosuccinate synthase (402 aa).

8–16 (AYSGGLDTS) provides a ligand contact to ATP. 2 residues coordinate L-citrulline: tyrosine 86 and serine 91. Glycine 116 is a binding site for ATP. Residues threonine 118, asparagine 122, and aspartate 123 each coordinate L-aspartate. Residue asparagine 122 coordinates L-citrulline. L-citrulline-binding residues include arginine 126, serine 175, serine 184, glutamate 260, and tyrosine 272.

This sequence belongs to the argininosuccinate synthase family. Type 1 subfamily. In terms of assembly, homotetramer.

It localises to the cytoplasm. It catalyses the reaction L-citrulline + L-aspartate + ATP = 2-(N(omega)-L-arginino)succinate + AMP + diphosphate + H(+). It functions in the pathway amino-acid biosynthesis; L-arginine biosynthesis; L-arginine from L-ornithine and carbamoyl phosphate: step 2/3. This chain is Argininosuccinate synthase, found in Clostridium novyi (strain NT).